The chain runs to 214 residues: Alpha-S1-casein (214 aa).

A signal peptide spans 1 to 15 (MKLLILTCLVAVALA). Residues 59–91 (IGSESTEDQAMEDAKQMKAGSSSSSEEIVPNSA) are disordered. Phosphoserine occurs at positions 61, 63, 79, 80, 81, 82, 83, 90, and 130.

This sequence belongs to the alpha-casein family. Mammary gland specific. Secreted in milk.

The protein resides in the secreted. In terms of biological role, important role in the capacity of milk to transport calcium phosphate. The polypeptide is Alpha-S1-casein (CSN1S1) (Capra hircus (Goat)).